The chain runs to 174 residues: ATP-dependent protease subunit HslV (174 aa).

Threonine 2 is a catalytic residue. Residues glycine 157, cysteine 160, and threonine 163 each coordinate Na(+).

The protein belongs to the peptidase T1B family. HslV subfamily. In terms of assembly, a double ring-shaped homohexamer of HslV is capped on each side by a ring-shaped HslU homohexamer. The assembly of the HslU/HslV complex is dependent on binding of ATP.

The protein localises to the cytoplasm. It catalyses the reaction ATP-dependent cleavage of peptide bonds with broad specificity.. Allosterically activated by HslU binding. Protease subunit of a proteasome-like degradation complex believed to be a general protein degrading machinery. This chain is ATP-dependent protease subunit HslV, found in Shewanella halifaxensis (strain HAW-EB4).